Consider the following 149-residue polypeptide: Myosin, essential light chain (149 aa).

EF-hand domains follow at residues 7–42 (SMID…FGLN) and 79–114 (GSYE…LGEK).

As to quaternary structure, myosin is a hexamer of 2 heavy chains and 4 light chains (two regulatory light chains and two essential light chains).

This is Myosin, essential light chain from Branchiostoma floridae (Florida lancelet).